Consider the following 249-residue polypeptide: Pyridoxamine 5'-phosphate oxidase family protein ustO (249 aa).

Residue 21–24 (LFFV) participates in substrate binding. Residues 76 to 81 (ATVMFC), 91 to 92 (RL), Arg-105, and 163 to 164 (RL) each bind FMN. 215 to 217 (ASY) lines the substrate pocket. A helical transmembrane segment spans residues 227–247 (TGMALMFLVMVVAQWVGYVLY).

Belongs to the pyridoxamine 5'-phosphate oxidase family. FMN serves as cofactor.

The protein resides in the membrane. It functions in the pathway mycotoxin biosynthesis. Its function is as follows. Pyridoxamine 5'-phosphate oxidase family protein; part of the gene cluster that mediates the biosynthesis of the secondary metabolite ustiloxin B, an antimitotic tetrapeptide. First, ustA is processed by the subtilisin-like endoprotease Kex2 that is outside the ustiloxin B gene cluster, at the C-terminal side of Arg-Lys, after transfer to Golgi apparatus through the endoplasmic reticulum (ER). Cleavage by KEX2 generates 16 peptides YAIG-I to YAIG-XVI. To process the precursor peptide further, at least two peptidases are necessary to cleave the N-terminal and C-terminal sides of the Tyr-Ala-Ile-Gly core peptide which serves as backbone for the synthesis of ustiloxin B, through cyclization and modification of the tyrosine with a non-protein coding amino acid, norvaline. One of the two peptidases must be the serine peptidase ustP; and the other pepdidase is probably ustH. Macrocyclization of the core peptide derived from ustA requires the tyrosinase ustQ, as well as the homologous oxidases ustYa and ustYb, and leads to the production of the first cyclization product N-desmethylustiloxin F. For the formation of N-desmethylustiloxin F, three oxidation steps are required, hydroxylation at the benzylic position, hydroxylation at either the aromatic ring of Tyr or beta-position of Ile, and oxidative cyclization. UstQ may catalyze the oxidation of a phenol moiety, whereas the ustYa and ustYb are most likely responsible for the remaining two-step oxidations. N-desmethylustiloxin F is then methylated by ustM to yield ustiloxin F which in turn substrate of the cytochrome P450 monooxygenase ustC which catalyzes the formation of S-deoxyustiloxin H. The flavoprotein monooxygenases ustF1 and ustF2 then participate in the modification of the side chain of S-deoxyustiloxin H, leading to the synthesis of an oxime intermediate, via ustiloxin H. Finally, carboxylative dehydration performed by the cysteine desulfurase-like protein ustD yields ustiloxin B. The polypeptide is Pyridoxamine 5'-phosphate oxidase family protein ustO (Aspergillus flavus (strain ATCC 200026 / FGSC A1120 / IAM 13836 / NRRL 3357 / JCM 12722 / SRRC 167)).